Consider the following 92-residue polypeptide: Small ribosomal subunit protein uS19c (92 aa).

The protein belongs to the universal ribosomal protein uS19 family.

Its subcellular location is the plastid. It localises to the chloroplast. Its function is as follows. Protein S19 forms a complex with S13 that binds strongly to the 16S ribosomal RNA. The chain is Small ribosomal subunit protein uS19c from Nasturtium officinale (Watercress).